The sequence spans 1037 residues: Sentrin-specific protease 7 (1037 aa).

Basic residues predominate over residues 1 to 10 (MDRARPGRRR). Disordered stretches follow at residues 1–28 (MDRA…SPAD) and 182–420 (ASLS…SEEN). Phosphoserine occurs at positions 12, 13, 25, and 189. Composition is skewed to polar residues over residues 182 to 211 (ASLS…NVNH) and 253 to 263 (TPQSKDFNSGN). Over residues 289–299 (VSRKRKKRGRS) the composition is skewed to basic residues. The span at 300-309 (NFHNSHNPKS) shows a compositional bias: polar residues. 2 stretches are compositionally biased toward basic and acidic residues: residues 310–320 (SVDKSTEYIKE) and 330–340 (KLEESNEDSHQ). Residues 381–399 (NKSSESSVSSEVAENSSAA) show a composition bias toward low complexity. Phosphoserine is present on residues Ser432 and Ser433. The interval 747 to 1037 (LGVTNEDLEC…HLQQQKGSSS (291 aa)) is protease. His847 is an active-site residue. The tract at residues 873-910 (EFQDQQSQHDNKTIDNDPHTTSTVFTSAEESQSTETSM) is disordered. Over residues 879 to 890 (SQHDNKTIDNDP) the composition is skewed to basic and acidic residues. Low complexity predominate over residues 898 to 910 (TSAEESQSTETSM). Asp926 is an active-site residue. Catalysis depends on Cys979, which acts as the Nucleophile.

It belongs to the peptidase C48 family.

The protein localises to the cytoplasm. Functionally, protease that acts as a positive regulator of the cGAS-STING pathway by catalyzing desumoylation of CGAS. Desumoylation of CGAS promotes DNA-binding activity of CGAS, subsequent oligomerization and activation. Deconjugates SUMO2 and SUMO3 from targeted proteins, but not SUMO1. Catalyzes the deconjugation of poly-SUMO2 and poly-SUMO3 chains. Has very low efficiency in processing full-length SUMO proteins to their mature forms. The chain is Sentrin-specific protease 7 (Senp7) from Rattus norvegicus (Rat).